Reading from the N-terminus, the 637-residue chain is Extracellular metalloproteinase MEP (637 aa).

The signal sequence occupies residues M1 to A21. A propeptide spanning residues H22–D246 is cleaved from the precursor. N288 carries an N-linked (GlcNAc...) asparagine glycan. H431 is a binding site for Zn(2+). E432 is a catalytic residue. H435 is a binding site for Zn(2+).

This sequence belongs to the peptidase M36 family. The cofactor is Zn(2+).

The protein resides in the secreted. Secreted metalloproteinase that probably acts as a virulence factor. Cleaves Z.mays Endochitinase A (CHIA) between residues 'Gly-29' and 'Cys-30'. The protein is Extracellular metalloproteinase MEP (MEP) of Fusarium vanettenii (strain ATCC MYA-4622 / CBS 123669 / FGSC 9596 / NRRL 45880 / 77-13-4) (Fusarium solani subsp. pisi).